A 190-amino-acid polypeptide reads, in one-letter code: Elongation factor P-like protein (190 aa).

It belongs to the elongation factor P family.

This Klebsiella pneumoniae subsp. pneumoniae (strain ATCC 700721 / MGH 78578) protein is Elongation factor P-like protein.